The primary structure comprises 44 residues: Cytochrome b559 subunit beta (44 aa).

A helical membrane pass occupies residues 17-41; it reads VRWLAVHTLAVPSVFFVGAIAAMQF. Heme contacts are provided by R18 and H23.

Belongs to the PsbE/PsbF family. As to quaternary structure, heterodimer of an alpha subunit and a beta subunit. PSII is composed of 1 copy each of membrane proteins PsbA, PsbB, PsbC, PsbD, PsbE, PsbF, PsbH, PsbI, PsbJ, PsbK, PsbL, PsbM, PsbT, PsbX, PsbY, PsbZ, Psb30/Ycf12, peripheral proteins PsbO, CyanoQ (PsbQ), PsbU, PsbV and a large number of cofactors. It forms dimeric complexes. It depends on heme b as a cofactor.

The protein resides in the cellular thylakoid membrane. This b-type cytochrome is tightly associated with the reaction center of photosystem II (PSII). PSII is a light-driven water:plastoquinone oxidoreductase that uses light energy to abstract electrons from H(2)O, generating O(2) and a proton gradient subsequently used for ATP formation. It consists of a core antenna complex that captures photons, and an electron transfer chain that converts photonic excitation into a charge separation. The polypeptide is Cytochrome b559 subunit beta (Synechocystis sp. (strain ATCC 27184 / PCC 6803 / Kazusa)).